We begin with the raw amino-acid sequence, 377 residues long: Cyclin-I (377 aa).

The segment at 356 to 377 (TDLSRQEGHASPCPPLQPVSVM) is disordered. The segment covering 367–377 (PCPPLQPVSVM) has biased composition (pro residues).

The protein belongs to the cyclin family.

The polypeptide is Cyclin-I (Ccni) (Mus musculus (Mouse)).